We begin with the raw amino-acid sequence, 175 residues long: Transcriptional repressor NrdR (175 aa).

A zinc finger spans residues 3 to 32; the sequence is CPYCSHPDSKVIDSRDVDDGVRRRRECVVC. In terms of domain architecture, ATP-cone spans 47-137; that stretch reads LFVVKKDQRR…VYREFTDITQ (91 aa).

It belongs to the NrdR family. It depends on Zn(2+) as a cofactor.

In terms of biological role, negatively regulates transcription of bacterial ribonucleotide reductase nrd genes and operons by binding to NrdR-boxes. The protein is Transcriptional repressor NrdR of Dehalococcoides mccartyi (strain ATCC BAA-2100 / JCM 16839 / KCTC 5957 / BAV1).